The sequence spans 404 residues: Cysteine desulfurase IscS (404 aa).

Pyridoxal 5'-phosphate contacts are provided by residues 73 to 74 (AT), Asn-153, Gln-181, and 201 to 203 (SAH). N6-(pyridoxal phosphate)lysine is present on Lys-204. Thr-241 contributes to the pyridoxal 5'-phosphate binding site. The active-site Cysteine persulfide intermediate is the Cys-327. Cys-327 serves as a coordination point for [2Fe-2S] cluster.

It belongs to the class-V pyridoxal-phosphate-dependent aminotransferase family. NifS/IscS subfamily. As to quaternary structure, homodimer. Forms a heterotetramer with IscU, interacts with other sulfur acceptors. Pyridoxal 5'-phosphate serves as cofactor.

It is found in the cytoplasm. The catalysed reaction is (sulfur carrier)-H + L-cysteine = (sulfur carrier)-SH + L-alanine. It participates in cofactor biosynthesis; iron-sulfur cluster biosynthesis. Master enzyme that delivers sulfur to a number of partners involved in Fe-S cluster assembly, tRNA modification or cofactor biosynthesis. Catalyzes the removal of elemental sulfur atoms from cysteine to produce alanine. Functions as a sulfur delivery protein for Fe-S cluster synthesis onto IscU, an Fe-S scaffold assembly protein, as well as other S acceptor proteins. This chain is Cysteine desulfurase IscS, found in Anaeromyxobacter sp. (strain K).